The sequence spans 1001 residues: Chloride channel protein clh-3 (1001 aa).

At 1–48 (MGIGTKILSKIEKNKTSDGLTIPLTPTTQKQSSSWCSFESIKTFFRTV) the chain is on the cytoplasmic side. The next 2 membrane-spanning stretches (helical) occupy residues 49-85 (IRDWIFLALLGFIMASLSFGMDYAILNLQNGQMRLFD) and 91-117 (HFTLAYLVWVGYVVGLILLSAVCAHYI). The short motif at 123 to 127 (GSGIP) is the Selectivity filter part_1 element. Residue serine 124 participates in chloride binding. An intramembrane region (helical) is located at residues 126–133 (IPEMKTIL). A run of 2 helical transmembrane segments spans residues 142–160 (LSVRTLLSKMIGLTLSLGS) and 167–185 (EGPFVHVASVVASQLTRLV). The Selectivity filter part_2 signature appears at 165–169 (GKEGP). 2 intramembrane regions (helical) span residues 202 to 214 (MLAAGCAVGVACT) and 218 to 226 (PIGGVLFSI). The next 5 helical transmembrane spans lie at 238–258 (YWRGFFAATCSATLFRILRMF), 285–313 (LPIFALIGLVCGLAGSIFVYLHRRTVLFL), 322–341 (IFQKYWLIYPIFIATFISSL), 405–425 (YSPFVTLSSFQVVYFFLAILA), and 433–456 (GIFMPVFVLGAAFGRLVGEGVFSL). Positions 433 to 437 (GIFMP) match the Selectivity filter part_3 motif. The chloride site is built by isoleucine 434 and phenylalanine 435. An intramembrane region (helical) is located at residues 473–487 (GVYAVVGAAAFCGAV). Positions 488 to 489 (TH) form an intramembrane region, note=Loop between two helices. Residues 490–501 (TVSVAVIVFELT) constitute an intramembrane region (helical). An intramembrane region (note=Loop between two helices) is located at residues 502 to 506 (GQLCH). The helical transmembrane segment at 507–524 (LLPVMIAVLIANAVASYL) threads the bilayer. Over 525-1001 (QPSIYDSIIR…LPDDVHDEKF (477 aa)) the chain is Cytoplasmic. A chloride-binding site is contributed by tyrosine 529. One can recognise a CBS 1 domain in the interval 560 to 619 (MISPLVYIAKDSTVGDIKRALETKTRIRAFPLVENMESLALVGSVSRSQLQRYVDSQIGT). A coiled-coil region spans residues 625 to 657 (EATRRIKQRLEDEESERKRREESKSDDTEDSLE). Over residues 634 to 650 (LEDEESERKRREESKSD) the composition is skewed to basic and acidic residues. The tract at residues 634–662 (LEDEESERKRREESKSDDTEDSLETTGAG) is disordered. Phosphoserine; by gck-3 occurs at positions 742 and 747. Positions 788–845 (IDSTPFQLSEYTSLFKAHSLFSLLGLNRAYVTKKGQLIGVVALKELRLAIEYLQSGKV) constitute a CBS 2 domain.

Belongs to the chloride channel (TC 2.A.49) family. As to quaternary structure, isoform a interacts (via RFLI motif) with gck-3 (via C-terminus). Phosphorylated by gck-3; phosphorylation at both Ser-742 and Ser-747 is required to inhibit channel activity. Dephosphorylated by gsp-1/2 during cell swelling and oocyte meiotic maturation, which results in channel activation. Expressed in excretory cell, 4 anterior epithelial cells of the intestine, hermaphrodite-specific neurons and enteric muscles. Expressed also in vulva and uterus. Isoform a is expressed in oocytes (at protein level).

The protein resides in the cell membrane. Voltage-gated chloride channel. Insensitive to depolarizing conditioning voltages, requires low voltages for activation, insensitive to chloride levels and has a mild sensitivity to low pH. Channel gating properties are conferred by the cytoplasmic C-terminus. Plays a role in egg laying by modulating hermaphrodite-specific neurons (HSN) excitability and the ovulatory contractions of gap-junction-coupled gonadal sheath cells. When active, may prevent tubular formation of the excretory canals. Activated during oocyte meiotic maturation and by membrane hyperpolarization and cell swelling. Inhibited by Zn(2+) and to a lesser extent by Cd(2+). In terms of biological role, voltage-gated chloride channel. Sensitive to depolarizing conditioning voltages, requires stronger voltages for activation and activation is slower, is inhibited by low concentrations of chloride and is activated by low pH. Channel gating properties are conferred by the cytoplasmic C-terminus. This is Chloride channel protein clh-3 from Caenorhabditis elegans.